A 60-amino-acid polypeptide reads, in one-letter code: UPF0434 protein Bpro_2950 (60 aa).

Belongs to the UPF0434 family.

The chain is UPF0434 protein Bpro_2950 from Polaromonas sp. (strain JS666 / ATCC BAA-500).